Consider the following 592-residue polypeptide: V-type ATP synthase alpha chain (592 aa).

232–239 (GPFGAGKT) provides a ligand contact to ATP.

Belongs to the ATPase alpha/beta chains family.

It catalyses the reaction ATP + H2O + 4 H(+)(in) = ADP + phosphate + 5 H(+)(out). Produces ATP from ADP in the presence of a proton gradient across the membrane. The V-type alpha chain is a catalytic subunit. This is V-type ATP synthase alpha chain from Clostridium botulinum (strain Alaska E43 / Type E3).